The sequence spans 180 residues: ADP ribosylation factor 4 (180 aa).

G2 carries N-myristoyl glycine lipidation. GTP-binding positions include 24-31, 67-71, and 126-129; these read GLDAAGKT, DVGGQ, and NKQD.

This sequence belongs to the small GTPase superfamily. Arf family. In terms of tissue distribution, uniformly distributed throughout adults.

The protein localises to the golgi apparatus. GTP-binding protein involved in protein trafficking; may modulate vesicle budding and uncoating within the Golgi apparatus. In Drosophila melanogaster (Fruit fly), this protein is ADP ribosylation factor 4.